A 432-amino-acid polypeptide reads, in one-letter code: Enolase (432 aa).

Gln167 is a binding site for (2R)-2-phosphoglycerate. The active-site Proton donor is Glu209. 3 residues coordinate Mg(2+): Asp246, Glu291, and Asp318. 4 residues coordinate (2R)-2-phosphoglycerate: Lys343, Arg372, Ser373, and Lys394. Lys343 functions as the Proton acceptor in the catalytic mechanism.

It belongs to the enolase family. As to quaternary structure, component of the RNA degradosome, a multiprotein complex involved in RNA processing and mRNA degradation. Requires Mg(2+) as cofactor.

The protein resides in the cytoplasm. The protein localises to the secreted. Its subcellular location is the cell surface. The catalysed reaction is (2R)-2-phosphoglycerate = phosphoenolpyruvate + H2O. Its pathway is carbohydrate degradation; glycolysis; pyruvate from D-glyceraldehyde 3-phosphate: step 4/5. Functionally, catalyzes the reversible conversion of 2-phosphoglycerate (2-PG) into phosphoenolpyruvate (PEP). It is essential for the degradation of carbohydrates via glycolysis. This chain is Enolase, found in Pseudoalteromonas translucida (strain TAC 125).